The chain runs to 679 residues: DNA-directed RNA polymerase subunit beta' (679 aa).

Residues cysteine 69, cysteine 71, cysteine 87, and cysteine 90 each coordinate Zn(2+). Residues aspartate 489, aspartate 491, and aspartate 493 each coordinate Mg(2+).

Belongs to the RNA polymerase beta' chain family. RpoC1 subfamily. As to quaternary structure, in plastids the minimal PEP RNA polymerase catalytic core is composed of four subunits: alpha, beta, beta', and beta''. When a (nuclear-encoded) sigma factor is associated with the core the holoenzyme is formed, which can initiate transcription. Requires Mg(2+) as cofactor. The cofactor is Zn(2+).

It localises to the plastid. The protein localises to the chloroplast. The enzyme catalyses RNA(n) + a ribonucleoside 5'-triphosphate = RNA(n+1) + diphosphate. Functionally, DNA-dependent RNA polymerase catalyzes the transcription of DNA into RNA using the four ribonucleoside triphosphates as substrates. This chain is DNA-directed RNA polymerase subunit beta', found in Oenothera argillicola (Appalachian evening primrose).